Reading from the N-terminus, the 238-residue chain is Peroxisomal coenzyme A diphosphatase NUDT7 (238 aa).

Lys-20 is modified (N6-succinyllysine). The region spanning 37 to 172 is the Nudix hydrolase domain; that stretch reads YNKYSVLLPL…VTRLGHRFIN (136 aa). Residues 77-98 carry the Nudix box motif; it reads KRDPTDMDDAATALREAQEEVG. Glu-92 and Glu-96 together coordinate Mg(2+). Residues 236 to 238 carry the Microbody targeting signal motif; sequence SRL.

It belongs to the Nudix hydrolase family. PCD1 subfamily. In terms of assembly, monomer. Requires Mn(2+) as cofactor. Mg(2+) is required as a cofactor. As to expression, expressed in liver, kidney, pancreas, pituitary, small intestine, spleen, heart and placenta. Weakly expressed in brain.

The protein localises to the peroxisome. It catalyses the reaction hexanoyl-CoA + H2O = hexanoyl-4'-phosphopantetheine + adenosine 3',5'-bisphosphate + 2 H(+). The catalysed reaction is octanoyl-CoA + H2O = S-octanoyl-4'-phosphopantetheine + adenosine 3',5'-bisphosphate + 2 H(+). The enzyme catalyses butanoyl-CoA + H2O = S-butanoyl-4'-phosphopantetheine + adenosine 3',5'-bisphosphate + 2 H(+). It carries out the reaction decanoyl-CoA + H2O = decanoyl-4'-phosphopantetheine + adenosine 3',5'-bisphosphate + 2 H(+). It catalyses the reaction dodecanoyl-CoA + H2O = S-dodecanoyl-4'-phosphopantetheine + adenosine 3',5'-bisphosphate + 2 H(+). The catalysed reaction is tetradecanoyl-CoA + H2O = tetradecanoyl-4'-phosphopantetheine + adenosine 3',5'-bisphosphate + 2 H(+). The enzyme catalyses choloyl-CoA + H2O = S-choloyl-4'-phosphopantetheine + adenosine 3',5'-bisphosphate + 2 H(+). It carries out the reaction 3alpha,7alpha,12alpha-trihydroxy-5beta-cholestan-26-oyl-CoA + H2O = 3alpha,7alpha,12alpha-trihydroxy-5beta-cholestan-26-oyl-4'-phosphopantetheine + adenosine 3',5'-bisphosphate + 2 H(+). It catalyses the reaction acetyl-CoA + H2O = S-acetyl-4'-phosphopantetheine + adenosine 3',5'-bisphosphate + 2 H(+). The catalysed reaction is CoA + H2O = (R)-4'-phosphopantetheine + adenosine 3',5'-bisphosphate + 2 H(+). The enzyme catalyses propanoyl-CoA + H2O = propanoyl-4'-phosphopantetheine + adenosine 3',5'-bisphosphate + 2 H(+). It carries out the reaction malonyl-CoA + H2O = malonyl-4'-phosphopantetheine + adenosine 3',5'-bisphosphate + 2 H(+). It catalyses the reaction succinyl-CoA + H2O = succinyl-4'-phosphopantetheine + adenosine 3',5'-bisphosphate + 2 H(+). The catalysed reaction is a 5'-end CoA-ribonucleoside in mRNA + H2O = a 5'-end phospho-adenosine-phospho-ribonucleoside in mRNA + (R)-4'-phosphopantetheine + 2 H(+). With respect to regulation, inhibited by fluoride. In terms of biological role, fatty acyl-coenzyme A (CoA) diphosphatase that hydrolyzes fatty acyl-CoA to yield acyl-4'-phosphopantetheine and adenosine 3',5'-bisphosphate. Cleaves CoA, CoA esters and oxidized CoA with similar efficiencies. Preferentially hydrolyzes medium-chain acyl-CoAs and bile acid-CoAs. Has no activity toward NDP-sugars, CDP-alcohols, (deoxy)nucleoside 5'-triphosphates, nucleoside 5'-di or monophosphates, diadenosine polyphosphates, NAD, NADH, NADP, NADPH or thymidine-5'-monophospho-p-nitrophenyl ester. May be required to eliminate oxidized CoA from peroxisomes, or regulate CoA and acyl-CoA levels in this organelle in response to metabolic demand. Does not play a role in U8 snoRNA decapping activity. Binds U8 snoRNA. Exhibits decapping activity towards dpCoA-capped RNAs in vitro. The polypeptide is Peroxisomal coenzyme A diphosphatase NUDT7 (Homo sapiens (Human)).